The sequence spans 1286 residues: Ankyrin-repeat and fibronectin type III domain-containing 1 (1286 aa).

ANK repeat units lie at residues 274–303 (QGNEAMFEAVEQQDLDAVQLLLYQYTPEEL) and 311–340 (EGLTPLDIAIMTNNVPIARILLRTGARESP). One can recognise a Fibronectin type-III domain in the interval 411–507 (VPANACLMVS…TTTPVCASPS (97 aa)). Positions 748-755 (GLYLGYLK) are highly conserved peptide sequence. Residues 999-1011 (SSHIDCLPSTSPS) are compositionally biased toward polar residues. 4 disordered regions span residues 999–1032 (SSHIDCLPSTSPSPEMHRRKAVSESQPCSDEEGC), 1086–1106 (KASMGPGQDPQGPGQGPDTDH), 1187–1207 (AEDPGEAEGPGPVVDGPRGLP), and 1242–1286 (AGQD…SSML). Residues 1260–1277 (SSLPSSTSSEMSPDPTSP) show a composition bias toward low complexity.

In terms of tissue distribution, expressed in both the suprachiasmatic nucleus and dorsal medial hypothalamus.

In terms of biological role, may play a role in neuronal function. This Mus musculus (Mouse) protein is Ankyrin-repeat and fibronectin type III domain-containing 1.